Consider the following 750-residue polypeptide: Cellulose synthase-like protein H1 (750 aa).

A run of 2 helical transmembrane segments spans residues leucine 27–alanine 47 and alanine 52–tryptophan 72. Active-site residues include aspartate 137 and aspartate 459. 6 helical membrane passes run valine 537 to leucine 557, glycine 570 to isoleucine 590, isoleucine 608 to phenylalanine 628, valine 664 to tryptophan 684, glycine 697 to leucine 717, and glycine 727 to cysteine 747.

Belongs to the glycosyltransferase 2 family. Plant cellulose synthase-like H subfamily.

It is found in the golgi apparatus membrane. Its function is as follows. Thought to be a Golgi-localized beta-glycan synthase that polymerize the backbones of noncellulosic polysaccharides (hemicelluloses) of plant cell wall. This Oryza sativa subsp. japonica (Rice) protein is Cellulose synthase-like protein H1 (CSLH1).